A 176-amino-acid polypeptide reads, in one-letter code: Ribose 1,5-bisphosphate phosphokinase PhnN (176 aa).

Position 10–17 (10–17) interacts with ATP; it reads GPSGAGKD.

Belongs to the ribose 1,5-bisphosphokinase family.

The catalysed reaction is alpha-D-ribose 1,5-bisphosphate + ATP = 5-phospho-alpha-D-ribose 1-diphosphate + ADP. Its pathway is metabolic intermediate biosynthesis; 5-phospho-alpha-D-ribose 1-diphosphate biosynthesis; 5-phospho-alpha-D-ribose 1-diphosphate from D-ribose 5-phosphate (route II): step 3/3. In terms of biological role, catalyzes the phosphorylation of ribose 1,5-bisphosphate to 5-phospho-D-ribosyl alpha-1-diphosphate (PRPP). The protein is Ribose 1,5-bisphosphate phosphokinase PhnN of Methylobacterium radiotolerans (strain ATCC 27329 / DSM 1819 / JCM 2831 / NBRC 15690 / NCIMB 10815 / 0-1).